The primary structure comprises 261 residues: Bidirectional sugar transporter SWEET1b (261 aa).

The Extracellular segment spans residues 1 to 6 (MEDLAK). A helical transmembrane segment spans residues 7-27 (FLFGVSGNVIALFLFLSPVPT). In terms of domain architecture, MtN3/slv 1 spans 7–95 (FLFGVSGNVI…VVFLVFASTH (89 aa)). Over 28 to 42 (FWRIIRRKSTEDFSG) the chain is Cytoplasmic. A helical membrane pass occupies residues 43–63 (VPYNMTLINCLLSAWYGLPFV). Topologically, residues 64-71 (SPNNILVS) are extracellular. A helical transmembrane segment spans residues 72–92 (TINGAGAVIETAYVVVFLVFA). At 93 to 101 (STHKTRLRT) the chain is on the cytoplasmic side. A helical transmembrane segment spans residues 102–122 (LGLAAAVASVFAAVALVSLLA). The Extracellular portion of the chain corresponds to 123 to 129 (LHGQHRK). A helical membrane pass occupies residues 130–150 (LLCGVAATVCSICMYASPLSI). In terms of domain architecture, MtN3/slv 2 spans 133-215 (GVAATVCSIC…VLYAIYRNNK (83 aa)). The Cytoplasmic segment spans residues 151-164 (MRLVIKTKSVEYMP). A helical membrane pass occupies residues 165–185 (FLMSLAVFLCGTSWFIYGLLG). Residues 186–189 (RDPF) are Extracellular-facing. A helical membrane pass occupies residues 190-210 (VTIPNGCGSFLGAVQLVLYAI). Topologically, residues 211 to 261 (YRNNKGAGGGSGGKQAGDDDVEMAEGRNNKVADGGAADDDSTAGGKAGTEV) are cytoplasmic. Residues 218 to 261 (GGGSGGKQAGDDDVEMAEGRNNKVADGGAADDDSTAGGKAGTEV) are disordered.

Belongs to the SWEET sugar transporter family. As to quaternary structure, forms homodimers. In terms of tissue distribution, highly expressed in leaves. Expressed at very low levels in roots, stems and panicles.

The protein localises to the cell membrane. It carries out the reaction D-glucose(out) = D-glucose(in). The catalysed reaction is D-galactose(in) = D-galactose(out). Its function is as follows. Mediates transport of sugars across the plasma membrane. Can transport glucose and galactose, but not fructose, mannose and sucrose. This Oryza sativa subsp. japonica (Rice) protein is Bidirectional sugar transporter SWEET1b (SWEET1B).